We begin with the raw amino-acid sequence, 396 residues long: Tyrosine--tRNA ligase (396 aa).

The 'HIGH' region motif lies at 43–52 (PTAPDIHLGH). A 'KMSKS' region motif is present at residues 227-231 (KMSKS). K230 serves as a coordination point for ATP. One can recognise an S4 RNA-binding domain in the interval 335–395 (IGLATLLKEA…GKRKFARVTV (61 aa)).

Belongs to the class-I aminoacyl-tRNA synthetase family. TyrS type 2 subfamily. In terms of assembly, homodimer.

Its subcellular location is the cytoplasm. It catalyses the reaction tRNA(Tyr) + L-tyrosine + ATP = L-tyrosyl-tRNA(Tyr) + AMP + diphosphate + H(+). Catalyzes the attachment of tyrosine to tRNA(Tyr) in a two-step reaction: tyrosine is first activated by ATP to form Tyr-AMP and then transferred to the acceptor end of tRNA(Tyr). The chain is Tyrosine--tRNA ligase from Haemophilus ducreyi (strain 35000HP / ATCC 700724).